The primary structure comprises 400 residues: tRNA (guanine-N(7)-)-methyltransferase (400 aa).

Positions 124, 149, and 176 each coordinate S-adenosyl-L-methionine. Residue aspartate 232 participates in substrate binding.

This sequence belongs to the class I-like SAM-binding methyltransferase superfamily. TrmB family.

It catalyses the reaction guanosine(46) in tRNA + S-adenosyl-L-methionine = N(7)-methylguanosine(46) in tRNA + S-adenosyl-L-homocysteine. It functions in the pathway tRNA modification; N(7)-methylguanine-tRNA biosynthesis. Catalyzes the formation of N(7)-methylguanine at position 46 (m7G46) in tRNA. This chain is tRNA (guanine-N(7)-)-methyltransferase, found in Helicobacter pylori (strain J99 / ATCC 700824) (Campylobacter pylori J99).